A 1128-amino-acid chain; its full sequence is MQGAQTSEDNLGSQSQPGPCGYIYFYPLATYPLREVATLGTGYAGHRCLTVPLLCGITVEPGFSINVKALHRRPDPNCGLLRATSYHRDIYVFHNAHMVPPIFEGPGLEALCGETREVFGYDAYSALPRESSKPGDFFPEGLDPSAYLGAVAITEAFKERLYSGNLVAIPSLKQEVAVGQSASVRVPLYDKEVFPEGVPQLRQFYNSDLSRCMHEALYTGLAQALRVRRVGKLVELLEKQSLQDQAKVAKVAPLKEFPASTISHPDSGALMIVDSAACELAVSYAPAMLEASHETPASLNYDSWPLFADCEGPEARVAALHRYNASLAPHVSTQIFATNSVLYVSGVSKSTGQGKESLFNSFYMTHGLGTLQEGTWDPCRRPCFSGWGGPDVTGTNGPGNYAVEHLVYAASFSPNLLARYAYYLQFCQGQKSSLTPVPETGSYVAGAAASPMCSLCEGRAPAVCLNTLFFRLRDRFPPVMSTQRRDPYVISGASGSYNETDFLGNFLNFIDKEDDGQRPDDEPRYTYWQLNQNLLERLSRLGIDAEGKLEKEPHGPRDFVKMFKDVDAAVDAEVVQFMNSMAKNNITYKDLVKSCYHVMQYSCNPFAQPACPIFTQLFYRSLLTILQDISLPICMCYENDNPGLGQSPPEWLKGHYQTLCTNFRSLAIDKGVLTAKEAKVVHGEPTCDLPDLDAALQGRLYGRRLPVRMSKVLMLCPRNIKIKNRVVFTGENAALQNSFIKSTTRRENYIINGPYMKFLNTYHKTLFPDTKLSSLYLWHNFSRRRSVPVPSGASAEEYSDLALFVDGGSRAHEESNVIDVVPGNLVTYAKQRLNNAILKACGQTQFYISLIQGLVPRTQSVPARDYPHVLGTRAVESAAAYAEATSSLTATTVVCAATDCLSQVCKARPVVTLPVTINKYTGVNGNNQIFQAGNLGYFMGRGVDRNLLQAPGAGLRKQAGGSSMRKKFVFATPTLGLTVKRRTQAATTYEIENIRAGLEAIISQKQEEDCVFDVVCNLVDAMGEACASLTRDDAEYLLGRFSVLADSVLETLATIASSGIEWTAGAARDFLEGVWGGPGAAQDNFISVAEPVGTASQASAGLLLGGGGQGSGGRRKRRLATVLPGLEV.

The required for nuclear localization stretch occupies residues 1104 to 1128 (LGGGGQGSGGRRKRRLATVLPGLEV).

Belongs to the herpesviridae major DNA-binding protein family. Homooligomers. Forms double-helical filaments necessary for the formation of replication compartments within the host nucleus. Interacts with the origin-binding protein. Interacts with the helicase primase complex; this interaction stimulates primer synthesis activity of the helicase-primase complex. Interacts with the DNA polymerase. Interacts with the alkaline exonuclease; this interaction increases its nuclease processivity.

It localises to the virion tegument. The protein localises to the host nucleus. In terms of biological role, plays several crucial roles in viral infection. Participates in the opening of the viral DNA origin to initiate replication by interacting with the origin-binding protein. May disrupt loops, hairpins and other secondary structures present on ssDNA to reduce and eliminate pausing of viral DNA polymerase at specific sites during elongation. Promotes viral DNA recombination by performing strand-transfer, characterized by the ability to transfer a DNA strand from a linear duplex to a complementary single-stranded DNA circle. Can also catalyze the renaturation of complementary single strands. Additionally, reorganizes the host cell nucleus, leading to the formation of prereplicative sites and replication compartments. This process is driven by the protein which can form double-helical filaments in the absence of DNA. In Epstein-Barr virus (strain GD1) (HHV-4), this protein is Major DNA-binding protein.